A 1203-amino-acid chain; its full sequence is MYLKSLTLKGFKSFASPTTLRFEPGITAVVGPNGSGKSNVVDALAWVMGEQGAKTLRGSKMEDVIFAGTLSRAPLGRAEVTLIIDNSDNVLPIEYSEVSITRRMFRDGASEYEINGSSCRLMDVQELLSDSGIGREMHVIVGQGKLDQILQSRPEDRRTFIEEAAGILKYRRRKEKALRKLDAMSANLARLTDLTTELRRQLKPLSRQAEVARRAATIQADLRDARLRLAADDLVSRQGQRDAIVEAETMMRRDHDEAAARLAVASEELAAHEAALTELSGRAESVQQIWFGLSTLVERVSATIRIAGERAYHLDVDPATPSDTDPDVLEAEAQQMEVAEQQLLAELAVARTQLEAARAELADRERHAVEADKAHLEAVRAEADRREGLALLAGQVETMRARIESIDDSVARLSERIEEVTARTQQILAEFETVQGRVGELDQSEVHLDEQHERAVAALRFANERVAELQSAERDAERQVVSLRARIDALTMGLERKDGAAWLARNYSDTGLLGSIAKLVKVRPGYEAALAAVLGPAADALAVDSLGAARSALTALKEADAGRATLVLADWLADAGPACVTGLPDGAQRALDLIEAPPWLQGALIAMLYGVVVVNYLAEALGVVDICPQLRVVTVDGDLVGAGWVSGGSGRRLSTLEVTSEIDKAGAELAAAEAHMAQLNAALSGALSEQVAHSDATEQALVALNESDTAILSMYDQLGRLGQEVRAAEAEWESLLAQREELEARRVSILEEVVELETRLHNVEQIQHVHALDENSAAARQLIVAAAEEARGVEVEALLAVRTAEERVNAVCGRANSLRRAAAAEREVRLRDQQAHAARIRAAAVAAAVTDCGQLLASRLTQAVDLAARHRDALATERQQRSVAIAAVRYEVNTLRVRLATLTDSLHRDEVANVQAALRIEQLEQLVLEQFGIAPVDLIAEYGPQVALLPTELEMAEFQQARERGEQVTSPAPMPYDRATQERRAKRAERELAELGRVNPLALEEFAALEERYNFLSTQLEDVKGARKDLLDVVAEVDARILQVFSDAFVDVEREFRGVFTSLFPGGEGRLRLTDPDDMLTTGIEVEARPSGKKVSRLSLLSGGEKSLIAVAMLVAIFKARPSPFYIMDEVEAALDDVNLCRLIGVFEQLRGQSQLIIITHQKPTMEVADTLYGVTMQGDGITAVISQRMRGQQVESLVTSSS.

Position 32 to 39 (32 to 39) interacts with ATP; sequence PNGSGKSN. Coiled coils occupy residues 167–203, 250–288, and 327–497; these read ILKY…RQLK, MMRR…SVQQ, and DVLE…LERK. The 112-residue stretch at 511 to 622 folds into the SMC hinge domain; the sequence is GLLGSIAKLV…VVNYLAEALG (112 aa). 3 coiled-coil regions span residues 657–689, 720–765, and 976–1030; these read EVTS…ALSE, RLGQ…NVEQ, and YDRA…RKDL.

Belongs to the SMC family. As to quaternary structure, homodimer.

The protein resides in the cytoplasm. Its function is as follows. Required for chromosome condensation and partitioning. The chain is Chromosome partition protein Smc from Mycobacterium leprae (strain TN).